The primary structure comprises 90 residues: Protein LURE 1.4 (90 aa).

The N-terminal stretch at 1–19 (MKCPSIFLTLLIFVSSCTS) is a signal peptide. Asn-23 carries an N-linked (GlcNAc...) asparagine glycan. 3 cysteine pairs are disulfide-bonded: Cys-58-Cys-75, Cys-61-Cys-82, and Cys-65-Cys-84. The segment at 67 to 87 (RRGKYIRTCSFERKLCRCSIS) is PRK6 binding.

The protein belongs to the DEFL family. Binds to PRK6 LRRs. In terms of tissue distribution, expressed in the pistil. Detected exclusively in the synergid cells.

It localises to the secreted. Functionally, pollen tube attractants guiding pollen tubes to the ovular micropyle. The protein is Protein LURE 1.4 of Arabidopsis thaliana (Mouse-ear cress).